The sequence spans 70 residues: Brevinin-1MT1 (70 aa).

A signal peptide spans 1–22 (MFTLKKSLLLLFFLGTINLSLC). Residues 23–44 (EQERDADEEERRDDDEMDVEVE) constitute a propeptide that is removed on maturation. Cysteine 64 and cysteine 70 form a disulfide bridge.

Belongs to the frog skin active peptide (FSAP) family. Brevinin subfamily. Expressed by the skin glands.

It is found in the secreted. Its function is as follows. Antimicrobial peptide with activity against a variety of Gram-negative and Gram-positive bacteria and against fungi. Shows strong hemolytic activity against human erythrocytes. In Amolops mantzorum (Sichuan torrent frog), this protein is Brevinin-1MT1.